The following is a 252-amino-acid chain: Probable truncated L-gulonolactone oxidase 7, mitochondrial (252 aa).

A mitochondrion-targeting transit peptide spans 1–102; the sequence is MKRSMRSHLA…ELNYGVLVRY (102 aa).

Belongs to the oxygen-dependent FAD-linked oxidoreductase family.

It localises to the mitochondrion. It carries out the reaction L-gulono-1,4-lactone + O2 = L-ascorbate + H2O2 + H(+). It functions in the pathway cofactor biosynthesis; L-ascorbate biosynthesis. Functionally, may be involved in the biosynthesis of ascorbic acid. In Arabidopsis thaliana (Mouse-ear cress), this protein is Probable truncated L-gulonolactone oxidase 7, mitochondrial.